We begin with the raw amino-acid sequence, 297 residues long: Tryptophan 2,3-dioxygenase (297 aa).

Substrate contacts are provided by residues 51-55, Y113, and R117; that span reads FIIQH. H240 lines the heme pocket. T254 serves as a coordination point for substrate.

Belongs to the tryptophan 2,3-dioxygenase family. Homotetramer. The cofactor is heme.

The catalysed reaction is L-tryptophan + O2 = N-formyl-L-kynurenine. The protein operates within amino-acid degradation; L-tryptophan degradation via kynurenine pathway; L-kynurenine from L-tryptophan: step 1/2. Heme-dependent dioxygenase that catalyzes the oxidative cleavage of the L-tryptophan (L-Trp) pyrrole ring and converts L-tryptophan to N-formyl-L-kynurenine. Catalyzes the oxidative cleavage of the indole moiety. The chain is Tryptophan 2,3-dioxygenase from Xanthomonas oryzae pv. oryzae (strain MAFF 311018).